The chain runs to 131 residues: Large ribosomal subunit protein bL17 (131 aa).

Belongs to the bacterial ribosomal protein bL17 family. As to quaternary structure, part of the 50S ribosomal subunit. Contacts protein L32.

This Burkholderia mallei (strain NCTC 10229) protein is Large ribosomal subunit protein bL17.